We begin with the raw amino-acid sequence, 264 residues long: MKQYLDMMRHVREQGAVKTDRTGTGTRSVFGYQMRFDLQQGFPLVTTKKLHLRSIIYELLWFLNGDTNIKYLKDNGVSIWDEWADESGDLGPVYGYQWRSWPAPNGEHIDQISNVLAQIKRNPDSRRHMVVAYNPAFVDQMALPPCHAMFQFYVAEGRLSCQLYQRSADIFLGVPFNIASYALLTHMFAQQCDLDVGDFIWTGGDVHLYNNHLDQAKEQLDREPRPLPQLQIRRKPASLFDYEFEDFEITGYDPHPHIKAPVAV.

Arg21 is a binding site for dUMP. His51 is a (6R)-5,10-methylene-5,6,7,8-tetrahydrofolate binding site. Residue 126–127 participates in dUMP binding; it reads RR. Cys146 acts as the Nucleophile in catalysis. Residues 166-169, Asn177, and 207-209 contribute to the dUMP site; these read RSAD and HLY. Asp169 is a (6R)-5,10-methylene-5,6,7,8-tetrahydrofolate binding site. Ala263 contacts (6R)-5,10-methylene-5,6,7,8-tetrahydrofolate.

It belongs to the thymidylate synthase family. Bacterial-type ThyA subfamily. In terms of assembly, homodimer.

The protein localises to the cytoplasm. The enzyme catalyses dUMP + (6R)-5,10-methylene-5,6,7,8-tetrahydrofolate = 7,8-dihydrofolate + dTMP. The protein operates within pyrimidine metabolism; dTTP biosynthesis. Catalyzes the reductive methylation of 2'-deoxyuridine-5'-monophosphate (dUMP) to 2'-deoxythymidine-5'-monophosphate (dTMP) while utilizing 5,10-methylenetetrahydrofolate (mTHF) as the methyl donor and reductant in the reaction, yielding dihydrofolate (DHF) as a by-product. This enzymatic reaction provides an intracellular de novo source of dTMP, an essential precursor for DNA biosynthesis. The protein is Thymidylate synthase of Hahella chejuensis (strain KCTC 2396).